Here is a 166-residue protein sequence, read N- to C-terminus: Phosphopantetheine adenylyltransferase (166 aa).

Ser-11 provides a ligand contact to substrate. ATP is bound by residues 11–12 and His-19; that span reads SF. Residues Lys-43, Val-80, and Arg-94 each contribute to the substrate site. ATP-binding positions include 95 to 97, Glu-105, and 130 to 136; these read GLR and VRTVTAT.

The protein belongs to the bacterial CoaD family. Homohexamer. Mg(2+) is required as a cofactor.

It localises to the cytoplasm. It catalyses the reaction (R)-4'-phosphopantetheine + ATP + H(+) = 3'-dephospho-CoA + diphosphate. It participates in cofactor biosynthesis; coenzyme A biosynthesis; CoA from (R)-pantothenate: step 4/5. Its function is as follows. Reversibly transfers an adenylyl group from ATP to 4'-phosphopantetheine, yielding dephospho-CoA (dPCoA) and pyrophosphate. This is Phosphopantetheine adenylyltransferase from Chelativorans sp. (strain BNC1).